A 464-amino-acid chain; its full sequence is MRYSLFKNYLPKEEVPEIRKELIKLALPAMGENVLQMLFGMADTAFLGHYSWKAMSGVGLSNQVFWVVQVVLIAASMGATVTIANAIGAGNRKAVRSLAWNSVFLAIFTGVILTALTPLSDVLINIFPNLEGEIESSAKEYLKVILSGSMGFSIMAVFSAMLRGAGDTRTPMIVTGLTNFLNIFLDYAMIFGKFGFPEMGVRGAAVATILSRFVGAGILTYVIFKREEFQLRKGLVPPKWSSQKEILRVGFPTAIENFVFSTGVLMFANILLIAGAEAYAGHRIGINVESLSFMPAFGISVAITTLVGRYNGMGNKEHVLGVIRQGWILSLLFQVTVGIIIFLFPEPLIRIFTSDPQIIEISKLPVKIIGLFQFFLAIDSTMNGALRGTGNTLPPMIITFISIWTARLPVAFVMVKYFQLGLLGAWIGMIADIIFRSTLKLLFFLSGKWEKRAVLTRERVKELG.

12 helical membrane passes run 22 to 42 (LIKL…FGMA), 64 to 84 (VFWV…VTIA), 104 to 124 (FLAI…DVLI), 142 to 162 (LKVI…SAML), 172 to 192 (MIVT…MIFG), 204 to 224 (AAVA…YVIF), 258 to 278 (FVFS…GAEA), 288 to 308 (VESL…TLVG), 326 to 346 (GWIL…LFPE), 358 to 378 (IIEI…FLAI), 384 to 404 (GALR…ISIW), and 410 to 430 (VAFV…IGMI).

The protein belongs to the multi antimicrobial extrusion (MATE) (TC 2.A.66.1) family.

It localises to the cell membrane. Functionally, multidrug efflux pump. This chain is Probable multidrug resistance protein NorM (norM), found in Thermotoga maritima (strain ATCC 43589 / DSM 3109 / JCM 10099 / NBRC 100826 / MSB8).